The following is a 161-amino-acid chain: Regulator of ribonuclease activity A (161 aa).

Belongs to the RraA family. As to quaternary structure, homotrimer. Binds to both RNA-binding sites in the C-terminal region of Rne and to RhlB.

Its subcellular location is the cytoplasm. Its function is as follows. Globally modulates RNA abundance by binding to RNase E (Rne) and regulating its endonucleolytic activity. Can modulate Rne action in a substrate-dependent manner by altering the composition of the degradosome. Modulates RNA-binding and helicase activities of the degradosome. This Shewanella sediminis (strain HAW-EB3) protein is Regulator of ribonuclease activity A.